Consider the following 167-residue polypeptide: Small ribosomal subunit protein uS5 (167 aa).

The region spanning 12 to 75 (LQEKLIAVNR…EKARRSMVTI (64 aa)) is the S5 DRBM domain.

The protein belongs to the universal ribosomal protein uS5 family. Part of the 30S ribosomal subunit. Contacts proteins S4 and S8.

With S4 and S12 plays an important role in translational accuracy. Functionally, located at the back of the 30S subunit body where it stabilizes the conformation of the head with respect to the body. This is Small ribosomal subunit protein uS5 from Vibrio cholerae serotype O1 (strain ATCC 39541 / Classical Ogawa 395 / O395).